The following is a 365-amino-acid chain: Isopentenyl-diphosphate delta-isomerase (365 aa).

4-5 (RK) lines the substrate pocket. Residues 62–64 (GMT), Ser92, and Asn121 each bind FMN. 92-94 (SQR) is a binding site for substrate. Gln155 is a binding site for substrate. Position 156 (Glu156) interacts with Mg(2+). Residues Lys187, Thr216, 267 to 269 (GVR), and 288 to 289 (AL) contribute to the FMN site.

This sequence belongs to the IPP isomerase type 2 family. As to quaternary structure, homooctamer. Dimer of tetramers. The cofactor is FMN. NADPH serves as cofactor. It depends on Mg(2+) as a cofactor.

It is found in the cytoplasm. It catalyses the reaction isopentenyl diphosphate = dimethylallyl diphosphate. In terms of biological role, involved in the biosynthesis of isoprenoids. Catalyzes the 1,3-allylic rearrangement of the homoallylic substrate isopentenyl (IPP) to its allylic isomer, dimethylallyl diphosphate (DMAPP). The polypeptide is Isopentenyl-diphosphate delta-isomerase (Methanopyrus kandleri (strain AV19 / DSM 6324 / JCM 9639 / NBRC 100938)).